Reading from the N-terminus, the 870-residue chain is LPS-assembly protein LptD (870 aa).

Residues 1 to 25 (MKQGKSFIFYCLVLLLCGFQQLSSA) form the signal peptide.

It belongs to the LptD family. In terms of assembly, component of the lipopolysaccharide transport and assembly complex. Interacts with LptE and LptA.

The protein resides in the cell outer membrane. In terms of biological role, together with LptE, is involved in the assembly of lipopolysaccharide (LPS) at the surface of the outer membrane. This Coxiella burnetii (strain RSA 493 / Nine Mile phase I) protein is LPS-assembly protein LptD.